We begin with the raw amino-acid sequence, 968 residues long: RNA polymerase-associated protein RapA (968 aa).

The Helicase ATP-binding domain maps to 164-334 (DVGRRHAPRV…FARLRLLDPD (171 aa)). 177–184 (DEVGLGKT) contacts ATP. The DEAH box signature appears at 280–283 (DEAH). A Helicase C-terminal domain is found at 490 to 643 (RVEWLMGYLT…HTCPTGRAVY (154 aa)).

The protein belongs to the SNF2/RAD54 helicase family. RapA subfamily. As to quaternary structure, interacts with the RNAP. Has a higher affinity for the core RNAP than for the holoenzyme. Its ATPase activity is stimulated by binding to RNAP.

Transcription regulator that activates transcription by stimulating RNA polymerase (RNAP) recycling in case of stress conditions such as supercoiled DNA or high salt concentrations. Probably acts by releasing the RNAP, when it is trapped or immobilized on tightly supercoiled DNA. Does not activate transcription on linear DNA. Probably not involved in DNA repair. The chain is RNA polymerase-associated protein RapA from Erwinia tasmaniensis (strain DSM 17950 / CFBP 7177 / CIP 109463 / NCPPB 4357 / Et1/99).